The primary structure comprises 123 residues: uncharacterized protein (123 aa).

This is an uncharacterized protein from Acanthamoeba polyphaga mimivirus (APMV).